A 350-amino-acid chain; its full sequence is Serine-threonine kinase receptor-associated protein (350 aa).

7 WD repeats span residues 12 to 56, 57 to 96, 98 to 137, 141 to 179, 180 to 212, 221 to 262, and 263 to 302; these read GHTR…GTFL, GHKGAVWGATLNKDATKAATAAADFTAKVWDAVSGDELMT, AHKHIVKTVDFTQDSNYLLTGGQDKLLRIYDLNKPEAEPK, GHTSGIKKALWCSEDKQILSADDKTVRLWDHATMTEVKS, LNFNMSVSSMEYIPEGEILVITYGRSIAFHSAV, EAPA…ESYK, and GHFGPIHCVRFSPDGELYASGSEDGTLRLWQTVVGKTYGL. A phosphoserine mark is found at Ser312, Ser335, and Ser338.

This sequence belongs to the WD repeat STRAP family. Part of the core SMN complex that contains SMN1, GEMIN2/SIP1, DDX20/GEMIN3, GEMIN4, GEMIN5, GEMIN6, GEMIN7, GEMIN8 and STRAP/UNRIP. Part of the SMN-Sm complex that contains SMN1, GEMIN2/SIP1, DDX20/GEMIN3, GEMIN4, GEMIN5, GEMIN6, GEMIN7, GEMIN8, STRAP/UNRIP and the Sm proteins SNRPB, SNRPD1, SNRPD2, SNRPD3, SNRPE, SNRPF and SNRPG. Associates with the SMN complex in the cytoplasm but not in the nucleus. Interacts with GEMIN6; the interaction is direct. Interacts with GEMIN7; the interaction is direct. Interacts with CSDE1/UNR and MAWBP. Interacts with PDPK1. Interacts with TRIM48.

It localises to the cytoplasm. Its subcellular location is the nucleus. The SMN complex catalyzes the assembly of small nuclear ribonucleoproteins (snRNPs), the building blocks of the spliceosome, and thereby plays an important role in the splicing of cellular pre-mRNAs. Most spliceosomal snRNPs contain a common set of Sm proteins SNRPB, SNRPD1, SNRPD2, SNRPD3, SNRPE, SNRPF and SNRPG that assemble in a heptameric protein ring on the Sm site of the small nuclear RNA to form the core snRNP (Sm core). In the cytosol, the Sm proteins SNRPD1, SNRPD2, SNRPE, SNRPF and SNRPG are trapped in an inactive 6S pICln-Sm complex by the chaperone CLNS1A that controls the assembly of the core snRNP. To assemble core snRNPs, the SMN complex accepts the trapped 5Sm proteins from CLNS1A forming an intermediate. Binding of snRNA inside 5Sm triggers eviction of the SMN complex, thereby allowing binding of SNRPD3 and SNRPB to complete assembly of the core snRNP. STRAP plays a role in the cellular distribution of the SMN complex. Negatively regulates TGF-beta signaling but positively regulates the PDPK1 kinase activity by enhancing its autophosphorylation and by significantly reducing the association of PDPK1 with 14-3-3 protein. This Homo sapiens (Human) protein is Serine-threonine kinase receptor-associated protein (STRAP).